Consider the following 368-residue polypeptide: Probable endopolygalacturonase I (368 aa).

A signal peptide spans 1–18; sequence MHSYQLLGLAAVGSLVSA. Positions 19-31 are excised as a propeptide; that stretch reads APAPSRVSEFAKK. C35 and C50 are joined by a disulfide. PbH1 repeat units lie at residues 140 to 161, 162 to 192, and 193 to 214; these read VEDSTFKGINIKNTPVQAISVQ, ATNVHLNDFTIDNSDGDDNGGHNTDGFDISE, and STGVYISGATVKNQDDCIAINS. The active-site Proton donor is the D207. C209 and C225 are oxidised to a cystine. H229 is an active-site residue. PbH1 repeat units lie at residues 244-265, 273-295, and 307-352; these read VKNVTISDSTVSNSANGVRIKT, VSEITYSNIQLSGITDYGIVIEQ, and STGI…DLSG. N246 carries N-linked (GlcNAc...) asparagine glycosylation. Cystine bridges form between C335/C340 and C359/C368.

This sequence belongs to the glycosyl hydrolase 28 family.

It localises to the secreted. The enzyme catalyses (1,4-alpha-D-galacturonosyl)n+m + H2O = (1,4-alpha-D-galacturonosyl)n + (1,4-alpha-D-galacturonosyl)m.. In terms of biological role, involved in maceration and soft-rotting of plant tissue. Hydrolyzes the 1,4-alpha glycosidic bonds of de-esterified pectate in the smooth region of the plant cell wall. The sequence is that of Probable endopolygalacturonase I (pgaI) from Aspergillus niger (strain ATCC MYA-4892 / CBS 513.88 / FGSC A1513).